Reading from the N-terminus, the 314-residue chain is Methionyl-tRNA formyltransferase (314 aa).

111 to 114 (SLLP) contacts (6S)-5,6,7,8-tetrahydrofolate.

Belongs to the Fmt family.

It carries out the reaction L-methionyl-tRNA(fMet) + (6R)-10-formyltetrahydrofolate = N-formyl-L-methionyl-tRNA(fMet) + (6S)-5,6,7,8-tetrahydrofolate + H(+). Functionally, attaches a formyl group to the free amino group of methionyl-tRNA(fMet). The formyl group appears to play a dual role in the initiator identity of N-formylmethionyl-tRNA by promoting its recognition by IF2 and preventing the misappropriation of this tRNA by the elongation apparatus. The polypeptide is Methionyl-tRNA formyltransferase (Chlorobium luteolum (strain DSM 273 / BCRC 81028 / 2530) (Pelodictyon luteolum)).